The primary structure comprises 250 residues: 1-(5-phosphoribosyl)-5-[(5-phosphoribosylamino)methylideneamino] imidazole-4-carboxamide isomerase (250 aa).

The active-site Proton acceptor is Asp12. Catalysis depends on Asp133, which acts as the Proton donor.

The protein belongs to the HisA/HisF family.

The protein resides in the cytoplasm. It catalyses the reaction 1-(5-phospho-beta-D-ribosyl)-5-[(5-phospho-beta-D-ribosylamino)methylideneamino]imidazole-4-carboxamide = 5-[(5-phospho-1-deoxy-D-ribulos-1-ylimino)methylamino]-1-(5-phospho-beta-D-ribosyl)imidazole-4-carboxamide. The protein operates within amino-acid biosynthesis; L-histidine biosynthesis; L-histidine from 5-phospho-alpha-D-ribose 1-diphosphate: step 4/9. The sequence is that of 1-(5-phosphoribosyl)-5-[(5-phosphoribosylamino)methylideneamino] imidazole-4-carboxamide isomerase from Zymomonas mobilis subsp. mobilis (strain ATCC 31821 / ZM4 / CP4).